Consider the following 722-residue polypeptide: MCDKKDVSPQKDQYTFLANCALGLEELIEAEIKGFSGVEVELGKGTVQWQGSLETGYRACLWSRFSSRILLKLSQFEVNSEDDLYQNSFTYDWHQHMSWKTTFAIDCTLSADATVGHSQFAALRIKDGIVDRFKEDGDERPSVKTTQPDVRFHIHVSGNEGTLYLDLSGESLHKRGYRVAGGMAPLKENLAAGIVALSGWPEKQEALPSLIDPMCGTGTLLIEAAMMFGDVAPGLARNYFGFLHWHQHDSQLWQALLDEAVAREDAGLDKTWPSFQGYDADPVVVSSARKNIIRAGLDEFIQVKCSPLVHLGAPTDRGMLICNPPYGERLSETEKVRQLYAAFGRIGRKHFAGWDVAVFISNPDLAESFRVSWEKKYRLFNGTIACRLSTGVFAEEEENSFAWEIQQVEVQEDALQFANRFKKNLKKYLKWAKKENISCFRVYDRDLQEFNLSVDLYEKWIHVQEYLPPKTIDPDLASRRFNIALRAIREILGLRSDRVFIKKRQRQKGAGQYQQQGDRKKMHQVREGNCYFLVNFRDYLDTGLFLDHRPIRLRIGRESLGKKFLNLYGYTGTASVHAAQGGAASTTTVDLSSTYLQWTEMNFSLNGFAENNHRTVKADCIKWLAEETELYDTIFVDPPTFSNTQKANRVFDIQRDHIQLLTLAMRRLSPGGLLIFSTNFRRFILDEKLAEQFDVKDITRESIPLDFSRNEKIHFCWEFRQK.

The THUMP domain occupies 55-167 (TGYRACLWSR…GNEGTLYLDL (113 aa)).

This sequence belongs to the methyltransferase superfamily. RlmKL family.

It localises to the cytoplasm. It carries out the reaction guanosine(2445) in 23S rRNA + S-adenosyl-L-methionine = N(2)-methylguanosine(2445) in 23S rRNA + S-adenosyl-L-homocysteine + H(+). The enzyme catalyses guanosine(2069) in 23S rRNA + S-adenosyl-L-methionine = N(2)-methylguanosine(2069) in 23S rRNA + S-adenosyl-L-homocysteine + H(+). In terms of biological role, specifically methylates the guanine in position 2445 (m2G2445) and the guanine in position 2069 (m7G2069) of 23S rRNA. The chain is Ribosomal RNA large subunit methyltransferase K/L from Desulfotalea psychrophila (strain LSv54 / DSM 12343).